A 246-amino-acid polypeptide reads, in one-letter code: NAD-dependent protein deacetylase (246 aa).

In terms of domain architecture, Deacetylase sirtuin-type spans methionine 1–serine 246. Residues alanine 25, phenylalanine 36, arginine 37, glutamine 106, isoleucine 108, aspartate 109, and histidine 124 each contribute to the NAD(+) site. Phenylalanine 36 is a nicotinamide binding site. Residues isoleucine 108 and aspartate 109 each contribute to the nicotinamide site. Histidine 124 acts as the Proton acceptor in catalysis. Zn(2+)-binding residues include cysteine 132, cysteine 135, cysteine 152, and cysteine 155. The NAD(+) site is built by serine 193, serine 194, asparagine 216, and aspartate 233.

Belongs to the sirtuin family. Class U subfamily. Requires Zn(2+) as cofactor.

It is found in the cytoplasm. It catalyses the reaction N(6)-acetyl-L-lysyl-[protein] + NAD(+) + H2O = 2''-O-acetyl-ADP-D-ribose + nicotinamide + L-lysyl-[protein]. Functionally, NAD-dependent protein deacetylase which modulates the activities of several enzymes which are inactive in their acetylated form. In Staphylococcus epidermidis (strain ATCC 12228 / FDA PCI 1200), this protein is NAD-dependent protein deacetylase.